Here is a 350-residue protein sequence, read N- to C-terminus: GTPase Obg (350 aa).

The region spanning 1–158 (MFIDSVKITL…RLVRLELKLI (158 aa)) is the Obg domain. Residues 159–339 (ADVGLVGFPN…LKFMLLEEIK (181 aa)) enclose the OBG-type G domain. GTP is bound by residues 165 to 172 (GFPNVGKS), 190 to 194 (FTTLT), 212 to 215 (DIPG), 280 to 283 (SKSD), and 320 to 322 (SSL). Positions 172 and 192 each coordinate Mg(2+).

Belongs to the TRAFAC class OBG-HflX-like GTPase superfamily. OBG GTPase family. Monomer. Mg(2+) serves as cofactor.

Its subcellular location is the cytoplasm. Its function is as follows. An essential GTPase which binds GTP, GDP and possibly (p)ppGpp with moderate affinity, with high nucleotide exchange rates and a fairly low GTP hydrolysis rate. Plays a role in control of the cell cycle, stress response, ribosome biogenesis and in those bacteria that undergo differentiation, in morphogenesis control. The chain is GTPase Obg from Campylobacter jejuni subsp. jejuni serotype O:2 (strain ATCC 700819 / NCTC 11168).